Here is a 1086-residue protein sequence, read N- to C-terminus: NAD(P) transhydrogenase, mitochondrial (1086 aa).

Residues 1–43 (MANLLKTVVTGCSCPFLSNLGSCKVLPGKKNFLRAFHTHRILW) constitute a mitochondrion transit peptide. Residues 44-474 (CKAPVKPGIP…TITPFRKTMT (431 aa)) are Mitochondrial matrix-facing. Position 70 is an N6-acetyllysine (Lys70). N6-succinyllysine is present on Lys117. An NAD(+)-binding site is contributed by 182–184 (RVT). An N6-succinyllysine modification is found at Lys224. Residues Val237, 257-259 (DTR), and Gly287 contribute to the NAD(+) site. N6-succinyllysine is present on Lys294. Residues Glu300 and Leu319 each contribute to the NAD(+) site. Lys331 carries the post-translational modification N6-succinyllysine. N6-acetyllysine is present on Lys397. A run of 4 helical transmembrane segments spans residues 475–493 (SASVYTAGLTGILGLGIAA), 501–521 (MVTTFGLAGIVGYHTVWGVTP), 527–546 (LMSVTNAISGLTAVGGLVLM), and 558–578 (GLAALATFISSVNIAGGFLVT). Residues 579 to 595 (QRMLDMFKRPTDPPEYN) lie on the Mitochondrial matrix side of the membrane. The next 5 helical transmembrane spans lie at 596–616 (YLYLLPAGTFVGGYLASLYSG), 622–642 (IMYLGSGLCCVGALAGLSTQG), 646–666 (LGNALGMIGVAGGLAATLGGL), 672–691 (LLAQMSGAMALGGTIGLTIA), and 702–722 (LVAAFHSLVGLAAVLTCIAEY). Residues 723 to 739 (IIEYPHFATDAAANLTK) lie on the Cytoplasmic side of the membrane. The next 5 helical transmembrane spans lie at 740-760 (IVAYLGTYIGGVTFSGSLVAY), 778-797 (HLLNAGLLAASVGGIIPFMM), 801-819 (FTTGITCLGSVSALSAVMG), 833-853 (VVITVLNSYSGWALCAEGFLL), and 857-879 (LLTIVGALIGSSGAILSYIMCVA). At 880–1086 (MNRSLANVIL…QAKVRESYQK (207 aa)) the chain is on the mitochondrial matrix side. NADP(+) is bound by residues Tyr933, 965 to 970 (VAGRMP), 1007 to 1011 (GANDT), 1026 to 1027 (GM), 1042 to 1049 (KRSLGVGY), and 1068 to 1069 (DA). N6-succinyllysine is present on Lys1079.

It in the N-terminal section; belongs to the AlaDH/PNT family. This sequence in the C-terminal section; belongs to the PNT beta subunit family. Homodimer.

It localises to the mitochondrion inner membrane. It catalyses the reaction NAD(+) + NADPH + H(+)(in) = NADH + NADP(+) + H(+)(out). The transhydrogenation between NADH and NADP is coupled to respiration and ATP hydrolysis and functions as a proton pump across the membrane. May play a role in reactive oxygen species (ROS) detoxification in the adrenal gland. This is NAD(P) transhydrogenase, mitochondrial (NNT) from Ovis aries (Sheep).